We begin with the raw amino-acid sequence, 159 residues long: Ribosomal RNA large subunit methyltransferase H (159 aa).

Residues L76, G108, and 127-132 each bind S-adenosyl-L-methionine; that span reads FSKMTL.

It belongs to the RNA methyltransferase RlmH family. Homodimer.

Its subcellular location is the cytoplasm. It carries out the reaction pseudouridine(1915) in 23S rRNA + S-adenosyl-L-methionine = N(3)-methylpseudouridine(1915) in 23S rRNA + S-adenosyl-L-homocysteine + H(+). Specifically methylates the pseudouridine at position 1915 (m3Psi1915) in 23S rRNA. The protein is Ribosomal RNA large subunit methyltransferase H of Bacillus mycoides (strain KBAB4) (Bacillus weihenstephanensis).